Reading from the N-terminus, the 180-residue chain is Inner membrane-spanning protein YciB (180 aa).

5 helical membrane-spanning segments follow: residues 22–42 (IFVA…FTWL), 50–70 (MTLV…AFHS), 72–92 (LFIK…LLVS), 121–141 (LSWA…AFWL), and 149–169 (FKVF…GVYI).

The protein belongs to the YciB family.

It is found in the cell inner membrane. In terms of biological role, plays a role in cell envelope biogenesis, maintenance of cell envelope integrity and membrane homeostasis. The sequence is that of Inner membrane-spanning protein YciB from Yersinia pseudotuberculosis serotype O:1b (strain IP 31758).